Here is a 305-residue protein sequence, read N- to C-terminus: tRNA pseudouridine synthase B (305 aa).

D39 acts as the Nucleophile in catalysis.

This sequence belongs to the pseudouridine synthase TruB family. Type 1 subfamily.

It carries out the reaction uridine(55) in tRNA = pseudouridine(55) in tRNA. Responsible for synthesis of pseudouridine from uracil-55 in the psi GC loop of transfer RNAs. The chain is tRNA pseudouridine synthase B from Staphylococcus aureus (strain Mu50 / ATCC 700699).